We begin with the raw amino-acid sequence, 528 residues long: Probable GTP-binding protein OBGM, mitochondrial (528 aa).

The N-terminal 45 residues, M1–G45, are a transit peptide targeting the mitochondrion. One can recognise an Obg domain in the interval M46–I339. Disordered stretches follow at residues L52–D87 and H167–G212. Gly residues predominate over residues P77–G86. Residues N197–N207 are compositionally biased toward basic and acidic residues. Residues A340 to D513 form the OBG-type G domain. Residues G346–S353 and D393–L397 each bind GTP.

The protein belongs to the TRAFAC class OBG-HflX-like GTPase superfamily. OBG GTPase family.

The protein resides in the mitochondrion. In terms of biological role, may bind GTP and have GTPase activity. The chain is Probable GTP-binding protein OBGM, mitochondrial (OBGM) from Oryza sativa subsp. japonica (Rice).